The sequence spans 450 residues: Tubulin alpha-3 chain (450 aa).

Q11 lines the GTP pocket. K40 is modified (N6-acetyllysine). GTP-binding residues include E71, S140, G144, T145, T179, N206, and N228. E71 contacts Mg(2+). E254 is a catalytic residue.

The protein belongs to the tubulin family. In terms of assembly, dimer of alpha and beta chains. A typical microtubule is a hollow water-filled tube with an outer diameter of 25 nm and an inner diameter of 15 nM. Alpha-beta heterodimers associate head-to-tail to form protofilaments running lengthwise along the microtubule wall with the beta-tubulin subunit facing the microtubule plus end conferring a structural polarity. Microtubules usually have 13 protofilaments but different protofilament numbers can be found in some organisms and specialized cells. Mg(2+) is required as a cofactor. In terms of processing, undergoes a tyrosination/detyrosination cycle, the cyclic removal and re-addition of a C-terminal tyrosine residue by the enzymes tubulin tyrosine carboxypeptidase (TTCP) and tubulin tyrosine ligase (TTL), respectively. Post-translationally, acetylation of alpha chains at Lys-40 stabilizes microtubules and affects affinity and processivity of microtubule motors. This modification has a role in multiple cellular functions, ranging from cell motility, cell cycle progression or cell differentiation to intracellular trafficking and signaling. During the early stages of oogenesis lky/Alpha-tubulin N-acetyltransferase 2 is the main acetyltransferase responsible for Lys-40 acetylation in germline cells while Atat/alpha-tubulin N-acetyltransferase 1 is the main acetyltransferase responsible for Lys-40 acetylation in somatic cells.

The protein resides in the cytoplasm. Its subcellular location is the cytoskeleton. The catalysed reaction is GTP + H2O = GDP + phosphate + H(+). Its function is as follows. Tubulin is the major constituent of microtubules, a cylinder consisting of laterally associated linear protofilaments composed of alpha- and beta-tubulin heterodimers. Microtubules grow by the addition of GTP-tubulin dimers to the microtubule end, where a stabilizing cap forms. Below the cap, tubulin dimers are in GDP-bound state, owing to GTPase activity of alpha-tubulin. The protein is Tubulin alpha-3 chain (alphaTub84D) of Drosophila melanogaster (Fruit fly).